Reading from the N-terminus, the 343-residue chain is Phospholipid phosphatase-related protein type 2 (343 aa).

Transmembrane regions (helical) follow at residues 12-32, 72-92, and 129-149; these read FSII…VVLL, ALIY…GELA, and FLGV…AGQV. Asn165 is a glycosylation site (N-linked (GlcNAc...) asparagine). 3 helical membrane passes run 210–230, 239–259, and 266–286; these read AALC…VFRV, SLCL…VAEY, and VLAG…CVVH. A disordered region spans residues 291–343; that stretch reads RPHSGRRLSPWEDLSQAPTMDSPLEKNPRPAGRIRHRHGSPHPSRRTVPAVAT. Ser299 and Ser312 each carry phosphoserine. Basic residues predominate over residues 322–335; sequence GRIRHRHGSPHPSR.

This sequence belongs to the PA-phosphatase related phosphoesterase family.

It localises to the membrane. This chain is Phospholipid phosphatase-related protein type 2, found in Mus musculus (Mouse).